The chain runs to 122 residues: Large ribosomal subunit protein uL14 (122 aa).

Belongs to the universal ribosomal protein uL14 family. As to quaternary structure, part of the 50S ribosomal subunit. Forms a cluster with proteins L3 and L19. In the 70S ribosome, L14 and L19 interact and together make contacts with the 16S rRNA in bridges B5 and B8.

Its function is as follows. Binds to 23S rRNA. Forms part of two intersubunit bridges in the 70S ribosome. The chain is Large ribosomal subunit protein uL14 from Nautilia profundicola (strain ATCC BAA-1463 / DSM 18972 / AmH).